The chain runs to 1507 residues: DE-cadherin (1507 aa).

A signal peptide spans 1-69 (MSTSVQRMSR…AISLLSPALA (69 aa)). Residues 70-261 (LHSPPDKNFS…IYLKRPIDKR (192 aa)) constitute a propeptide that is removed on maturation. 7 Cadherin domains span residues 97 to 195 (VKEE…APAF), 204 to 301 (MSEN…PPSF), 311 to 412 (LKEN…IPYY), 420 to 522 (ILEN…KPHF), 532 to 633 (LLED…TILE), 631 to 733 (ILEE…APFL), and 741 to 835 (WQEN…NDNA). Residues 262–1328 (PGQSYAIIVR…VAFSFGIDRN (1067 aa)) lie on the Extracellular side of the membrane. N-linked (GlcNAc...) asparagine glycosylation is found at N317, N466, and N552. Residues N766, N949, N983, N999, and N1073 are each glycosylated (N-linked (GlcNAc...) asparagine). The 40-residue stretch at 1084–1123 (VQAQCVCEAPLMRRCLNGGSPRYGENDVCDCIDGFTGPHC) folds into the EGF-like domain. Cystine bridges form between C1098/C1112 and C1114/C1123. In terms of domain architecture, Laminin G-like spans 1125–1313 (LVSVAFYGSG…SVFRNIDSGC (189 aa)). N1145, N1274, and N1290 each carry an N-linked (GlcNAc...) asparagine glycan. A disulfide bridge connects residues C1287 and C1313. The helical transmembrane segment at 1329 to 1349 (FIIAIIVCLALLLIILLAVVV) threads the bilayer. Residues 1350–1507 (QKKQKNGWHE…NVDDDQGWRI (158 aa)) are Cytoplasmic-facing. Positions 1350–1507 (QKKQKNGWHE…NVDDDQGWRI (158 aa)) are interaction with Inx2. Residues 1488–1507 (YGEEPSDTDSNVDDDQGWRI) are disordered. S1493 carries the post-translational modification Phosphoserine.

Interacts (via cytoplasmic region) with Inx2 (via cytoplasmic loop). Interacts with Hakai. Interacts with Myo31DF. Post-translationally, N-glycosylation is important for biosynthesis and function. In terms of tissue distribution, in early stage 9 and stage 10 oocytes, expressed in border cells, strongly expressed in polar cells and very weakly expressed in the nurse cells (at protein level). In the embryo, expressed in the leading edge cells of the dorsal epidermis (at protein level). Stage 10 embryos exhibit intense expression in epithelial cells. Stage 14 embryos show expression in the hindgut (at the apical poles of cell-cell boundaries), at the apical junctions of tracheal cells and in the dorsal longitudinal trunk. In stage 16 embryos the glial midline cells of the central nervous system show strong expression.

It is found in the cell membrane. Its subcellular location is the apical cell membrane. Cadherins are calcium-dependent cell adhesion proteins. In connecting cells they preferentially interact with themselves in a homophilic manner; cadherins may thus contribute to the sorting of heterogeneous cell types. During oogenesis, integral component of the guidance mechanisms that regulate the directional persistent collective migration of the border cell (BC) cluster through the nurse cells to the oocyte. Functions downstream of the two chemoattractant receptors, Pvr and Egfr, to promote BC adhesion between the leader cells of the migrating cluster and the surrounding nurse cells. This adhesion increases Rac1 signaling in the leading cells, which in turn stabilizes DE-cadherin/DE-cadherin adhesions through the formation of forward-directed protrusions which attach/detach to the surrounding nurse cells in order to pull the cluster through the egg chamber to the oocyte. Within the BC cluster, also promotes adhesion between BCs, and between BCs and polar cells which enables the lead BC to communicate direction to the other cells in the cluster, providing polarity to each individual cell and ensuring collective behavior. May function in cell intercalation in the lateral epidermis during germband extension. Contributes to the determination of body left-right asymmetry by enhancing Myo31DF activity and inhibiting Myo61F activity. The protein is DE-cadherin of Drosophila melanogaster (Fruit fly).